The following is a 417-amino-acid chain: Acid phosphatase (417 aa).

The N-terminal stretch at 1-19 (MFTKQSLVTLLGGLSLAVA) is a signal peptide. Residues asparagine 122, asparagine 187, and asparagine 209 are each glycosylated (N-linked (GlcNAc...) asparagine). Aspartate 216 functions as the Proton donor in the catalytic mechanism. N-linked (GlcNAc...) asparagine glycosylation is found at asparagine 218, asparagine 333, and asparagine 383.

The N-terminus is blocked.

It localises to the secreted. It catalyses the reaction a phosphate monoester + H2O = an alcohol + phosphate. This is Acid phosphatase (phoA) from Aspergillus niger.